The chain runs to 232 residues: Imidazole glycerol phosphate synthase subunit HisF (232 aa).

Catalysis depends on residues Asp-11 and Asp-130.

This sequence belongs to the HisA/HisF family. As to quaternary structure, heterodimer of HisH and HisF.

It is found in the cytoplasm. The enzyme catalyses 5-[(5-phospho-1-deoxy-D-ribulos-1-ylimino)methylamino]-1-(5-phospho-beta-D-ribosyl)imidazole-4-carboxamide + L-glutamine = D-erythro-1-(imidazol-4-yl)glycerol 3-phosphate + 5-amino-1-(5-phospho-beta-D-ribosyl)imidazole-4-carboxamide + L-glutamate + H(+). Its pathway is amino-acid biosynthesis; L-histidine biosynthesis; L-histidine from 5-phospho-alpha-D-ribose 1-diphosphate: step 5/9. IGPS catalyzes the conversion of PRFAR and glutamine to IGP, AICAR and glutamate. The HisF subunit catalyzes the cyclization activity that produces IGP and AICAR from PRFAR using the ammonia provided by the HisH subunit. This Listeria monocytogenes serotype 4a (strain HCC23) protein is Imidazole glycerol phosphate synthase subunit HisF.